Reading from the N-terminus, the 41-residue chain is Large ribosomal subunit protein bL36 (41 aa).

This sequence belongs to the bacterial ribosomal protein bL36 family.

This chain is Large ribosomal subunit protein bL36, found in Rickettsia prowazekii (strain Madrid E).